We begin with the raw amino-acid sequence, 714 residues long: Fatty acid oxidation complex subunit alpha (714 aa).

Residues 1-190 (MDMTSAFTLN…KSGLVDEIVP (190 aa)) form an enoyl-CoA hydratase region. Residues 306–714 (GTLDSIGILG…FWKTSATDRH (409 aa)) are 3-hydroxyacyl-CoA dehydrogenase.

The protein in the N-terminal section; belongs to the enoyl-CoA hydratase/isomerase family. It in the central section; belongs to the 3-hydroxyacyl-CoA dehydrogenase family. Heterotetramer of two alpha chains (FadJ) and two beta chains (FadI).

It localises to the cytoplasm. The enzyme catalyses a (3S)-3-hydroxyacyl-CoA = a (2E)-enoyl-CoA + H2O. It catalyses the reaction a 4-saturated-(3S)-3-hydroxyacyl-CoA = a (3E)-enoyl-CoA + H2O. It carries out the reaction a (3S)-3-hydroxyacyl-CoA + NAD(+) = a 3-oxoacyl-CoA + NADH + H(+). The catalysed reaction is (3S)-3-hydroxybutanoyl-CoA = (3R)-3-hydroxybutanoyl-CoA. The protein operates within lipid metabolism; fatty acid beta-oxidation. In terms of biological role, catalyzes the formation of a hydroxyacyl-CoA by addition of water on enoyl-CoA. Also exhibits 3-hydroxyacyl-CoA epimerase and 3-hydroxyacyl-CoA dehydrogenase activities. This Escherichia fergusonii (strain ATCC 35469 / DSM 13698 / CCUG 18766 / IAM 14443 / JCM 21226 / LMG 7866 / NBRC 102419 / NCTC 12128 / CDC 0568-73) protein is Fatty acid oxidation complex subunit alpha.